The sequence spans 458 residues: Protein adenylyltransferase FICD (458 aa).

Residues 1–23 (MILMPMASVVAVAEPKWVSVWGR) are Cytoplasmic-facing. Residues 24 to 44 (FLWMALLSMALGSLLALLLPL) form a helical; Signal-anchor for type II membrane protein membrane-spanning segment. At 45-458 (GVVEEHCLAV…GFKETLPVRP (414 aa)) the chain is on the lumenal side. T80 is modified (O-AMP-threonine; by autocatalysis). TPR repeat units follow at residues 106–139 (AKAALNQALEMKRQGKRGKAHKLFLHALKMDPGF) and 140–173 (VDALNEFGIFSEEDKDIIQADYLYTRALTISPFH). O-AMP-threonine; by autocatalysis is present on T183. The Inhibitory (S/T)XXXE(G/N) motif motif lies at 230-235 (TVAIEG). E234 is an ATP binding site. Residue N275 is glycosylated (N-linked (GlcNAc...) asparagine). The Fido domain maps to 285–420 (VTMDDMLEIH…VRPFIRFIAK (136 aa)). 316–319 (VGHH) serves as a coordination point for ATP. H363 is a catalytic residue. ATP contacts are provided by residues 367-374 (DGNGRTSR), 399-400 (YY), and N407.

This sequence belongs to the fic family. As to quaternary structure, homodimer. Interacts with HD. The cofactor is Mg(2+). Mn(2+) is required as a cofactor. Post-translationally, auto-AMPylated in vitro.

The protein localises to the endoplasmic reticulum membrane. The catalysed reaction is L-tyrosyl-[protein] + ATP = O-(5'-adenylyl)-L-tyrosyl-[protein] + diphosphate. It carries out the reaction 3-O-(5'-adenylyl)-L-threonyl-[protein] + H2O = L-threonyl-[protein] + AMP + H(+). It catalyses the reaction L-threonyl-[protein] + ATP = 3-O-(5'-adenylyl)-L-threonyl-[protein] + diphosphate. With respect to regulation, the side chain of Glu-234 determines which of the two opposing activities (AMPylase or de-AMPylase) will take place. In response to endoplasmic reticulum stress, mediates de-AMPylase activity. Adenylyltransferase activity is inhibited by the inhibitory helix present at the N-terminus: Glu-234 binds ATP and competes with ATP-binding at Arg-374, thereby preventing adenylyltransferase activity. In unstressed cells, disengagement of Glu-234 promotes adenylyltransferase activity. Activation dissociates ATP-binding from Glu-234, allowing ordered binding of the entire ATP moiety with the alpha-phosphate in an orientation that is productive for accepting an incoming target hydroxyl side chain. In terms of biological role, protein that can both mediate the addition of adenosine 5'-monophosphate (AMP) to specific residues of target proteins (AMPylation), and the removal of the same modification from target proteins (de-AMPylation), depending on the context. The side chain of Glu-231 determines which of the two opposing activities (AMPylase or de-AMPylase) will take place. Acts as a key regulator of the ERN1/IRE1-mediated unfolded protein response (UPR) by mediating AMPylation or de-AMPylation of HSPA5/BiP. In unstressed cells, acts as an adenylyltransferase by mediating AMPylation of HSPA5/BiP at 'Thr-518', thereby inactivating it. In response to endoplasmic reticulum stress, acts as a phosphodiesterase by mediating removal of ATP (de-AMPylation) from HSPA5/BiP at 'Thr-518', leading to restore HSPA5/BiP activity. Although it is able to AMPylate RhoA, Rac and Cdc42 Rho GTPases in vitro, Rho GTPases do not constitute physiological substrates. In Mus musculus (Mouse), this protein is Protein adenylyltransferase FICD.